We begin with the raw amino-acid sequence, 86 residues long: Small ribosomal subunit protein bS16 (86 aa).

It belongs to the bacterial ribosomal protein bS16 family.

In Nostoc punctiforme (strain ATCC 29133 / PCC 73102), this protein is Small ribosomal subunit protein bS16.